The sequence spans 426 residues: DNA primase DnaG (426 aa).

Residues 171–245 (DTVILVEGRA…KVDFVARAPP (75 aa)) form the Toprim domain. Positions 177, 219, and 221 each coordinate Mg(2+). The tract at residues 407 to 426 (KSEENIQESVSTGESAQTSP) is disordered. Polar residues predominate over residues 413–426 (QESVSTGESAQTSP).

The protein belongs to the archaeal DnaG primase family. As to quaternary structure, forms a ternary complex with MCM helicase and DNA. Component of the archaeal exosome complex. Mg(2+) serves as cofactor.

The catalysed reaction is ssDNA + n NTP = ssDNA/pppN(pN)n-1 hybrid + (n-1) diphosphate.. RNA polymerase that catalyzes the synthesis of short RNA molecules used as primers for DNA polymerase during DNA replication. Also part of the exosome, which is a complex involved in RNA degradation. Acts as a poly(A)-binding protein that enhances the interaction between heteromeric, adenine-rich transcripts and the exosome. The sequence is that of DNA primase DnaG from Thermofilum pendens (strain DSM 2475 / Hrk 5).